Reading from the N-terminus, the 124-residue chain is Small ribosomal subunit protein uS12 (124 aa).

Asp89 carries the 3-methylthioaspartic acid modification.

It belongs to the universal ribosomal protein uS12 family. Part of the 30S ribosomal subunit. Contacts proteins S8 and S17. May interact with IF1 in the 30S initiation complex.

Functionally, with S4 and S5 plays an important role in translational accuracy. Its function is as follows. Interacts with and stabilizes bases of the 16S rRNA that are involved in tRNA selection in the A site and with the mRNA backbone. Located at the interface of the 30S and 50S subunits, it traverses the body of the 30S subunit contacting proteins on the other side and probably holding the rRNA structure together. The combined cluster of proteins S8, S12 and S17 appears to hold together the shoulder and platform of the 30S subunit. The protein is Small ribosomal subunit protein uS12 of Campylobacter hominis (strain ATCC BAA-381 / DSM 21671 / CCUG 45161 / LMG 19568 / NCTC 13146 / CH001A).